Reading from the N-terminus, the 701-residue chain is MKALLASLLESSLNSFQKLSLTHCYAIKCGSISDIYVSNRILDSYIKFGFLGYANMLFDEMPKRDSVSWNTMISGYTSCGKLEDAWCLFTCMKRSGSDVDGYSFSRLLKGIASVKRFDLGEQVHGLVIKGGYECNVYVGSSLVDMYAKCERVEDAFEAFKEISEPNSVSWNALIAGFVQVRDIKTAFWLLGLMEMKAAVTMDAGTFAPLLTLLDDPMFCNLLKQVHAKVLKLGLQHEITICNAMISSYADCGSVSDAKRVFDGLGGSKDLISWNSMIAGFSKHELKESAFELFIQMQRHWVETDIYTYTGLLSACSGEEHQIFGKSLHGMVIKKGLEQVTSATNALISMYIQFPTGTMEDALSLFESLKSKDLISWNSIITGFAQKGLSEDAVKFFSYLRSSEIKVDDYAFSALLRSCSDLATLQLGQQIHALATKSGFVSNEFVISSLIVMYSKCGIIESARKCFQQISSKHSTVAWNAMILGYAQHGLGQVSLDLFSQMCNQNVKLDHVTFTAILTACSHTGLIQEGLELLNLMEPVYKIQPRMEHYAAAVDLLGRAGLVNKAKELIESMPLNPDPMVLKTFLGVCRACGEIEMATQVANHLLEIEPEDHFTYVSLSHMYSDLKKWEEKASVKKMMKERGVKKVPGWSWIEIRNQVKAFNAEDRSNPLCQDIYMMIKDLTQEMQWLDSDNGVDADSLHA.

PPR repeat units follow at residues 34-64, 65-99, 100-134, 135-165, 166-200, 202-236, 237-267, 269-303, 304-338, 339-371, 372-406, 407-441, 442-472, 474-508, 509-539, and 545-575; these read DIYV…MPKR, DSVS…GSDV, DGYS…GYEC, NVYV…ISEP, NSVS…AAVT, DAGT…GLQH, EITI…LGGS, DLIS…WVET, DIYT…GLEQ, VTSA…LKSK, DLIS…EIKV, DDYA…GFVS, NEFV…ISSK, STVA…NVKL, DHVT…MEPV, and RMEH…MPLN. The type E motif stretch occupies residues 580-655; it reads VLKTFLGVCR…VPGWSWIEIR (76 aa). The type E(+) motif stretch occupies residues 656–686; sequence NQVKAFNAEDRSNPLCQDIYMMIKDLTQEMQ.

The protein belongs to the PPR family. PCMP-E subfamily.

This is Putative pentatricopeptide repeat-containing protein At3g25970 (PCMP-E46) from Arabidopsis thaliana (Mouse-ear cress).